Here is a 431-residue protein sequence, read N- to C-terminus: Transmembrane protease serine 11C (431 aa).

The Cytoplasmic portion of the chain corresponds to 1-33; the sequence is MARGQPRRSEEQWTALQNRTECKTKIKLTRCGK. A helical; Signal-anchor for type II membrane protein transmembrane segment spans residues 34 to 54; that stretch reads ITLGILTAVLAAVLIGLIAYF. At 55–431 the chain is on the extracellular side; the sequence is AACGKDSFYY…RDWITSKTGL (377 aa). In terms of domain architecture, SEA spans 60–177; sequence DSFYYHVSFK…SSFKFSDIAM (118 aa). Asn99 is a glycosylation site (N-linked (GlcNAc...) asparagine). The Peptidase S1 domain maps to 200–430; sequence VAGGQDAEEG…YRDWITSKTG (231 aa). A disulfide bond links Cys225 and Cys241. His240 serves as the catalytic Charge relay system. Asn276 carries N-linked (GlcNAc...) asparagine glycosylation. The Charge relay system role is filled by Asp285. Residue Asn347 is glycosylated (N-linked (GlcNAc...) asparagine). Intrachain disulfides connect Cys350/Cys366 and Cys377/Cys406. The active-site Charge relay system is the Ser381.

It belongs to the peptidase S1 family. Proteolytically cleaved via an autocatalytic mechanism. As to expression, expressed specifically in Purkinje neurons of the cerebellum (at protein level). Also detected in spinal cord.

The protein resides in the cell membrane. Its subcellular location is the cell projection. It localises to the dendrite. The protein localises to the perikaryon. Its function is as follows. Serine protease which has a preference for Arg or Lys in position P1 and uncharged residues in positions P2 and P3. Shows specificity towards FGF2 in vitro. The chain is Transmembrane protease serine 11C from Mus musculus (Mouse).